The sequence spans 29 residues: Cytochrome b6-f complex subunit 8 (29 aa).

The helical transmembrane segment at 3–23 (LITITWASVMVAFTFSLSLVV) threads the bilayer.

This sequence belongs to the PetN family. In terms of assembly, the 4 large subunits of the cytochrome b6-f complex are cytochrome b6, subunit IV (17 kDa polypeptide, PetD), cytochrome f and the Rieske protein, while the 4 small subunits are PetG, PetL, PetM and PetN. The complex functions as a dimer.

It is found in the plastid. Its subcellular location is the chloroplast thylakoid membrane. In terms of biological role, component of the cytochrome b6-f complex, which mediates electron transfer between photosystem II (PSII) and photosystem I (PSI), cyclic electron flow around PSI, and state transitions. The polypeptide is Cytochrome b6-f complex subunit 8 (Chaetosphaeridium globosum (Charophycean green alga)).